A 300-amino-acid polypeptide reads, in one-letter code: Ribosome-inactivating protein 3 (300 aa).

E207 is an active-site residue.

Belongs to the ribosome-inactivating protein family. Type 1 RIP subfamily. In terms of assembly, monomer. As to expression, accumulates to high levels in seeds.

Its subcellular location is the cytoplasm. The catalysed reaction is Endohydrolysis of the N-glycosidic bond at one specific adenosine on the 28S rRNA.. Functionally, possesses features of some constitutive defense agent. The coordinate Opaque-2-controlled synthesis of this protein and the major seed storage proteins (zeins) may provide the germinating seedling with both nutritional benefits and protection against pathogen invasion of the surrounding endosperm. This is Ribosome-inactivating protein 3 (CRIP3) from Zea mays (Maize).